Reading from the N-terminus, the 221-residue chain is Early nodulin-like protein 4 (221 aa).

Residues 1–21 form the signal peptide; the sequence is MVFVKMTDVYLMIVMLMGLGF. Residues 29–130 form the Phytocyanin domain; it reads HKFYVGGRDG…GQKLAVTVMS (102 aa). N-linked (GlcNAc...) asparagine glycans are attached at residues Asn59 and Asn85. A disulfide bond links Cys84 and Cys118. A disordered region spans residues 130 to 185; the sequence is STGHHSHTPRHPSPSPSPSASPVRKALLSPAPIPVHKALSSPAPTPGVDPSHSEVL. A lipid anchor (GPI-anchor amidated asparagine) is attached at Asn197. The propeptide at 198-221 is removed in mature form; the sequence is LAGSVAPGVISLGLVLVIMISSMV.

Belongs to the early nodulin-like (ENODL) family. In terms of tissue distribution, confined to flowers.

It is found in the cell membrane. In terms of biological role, may act as a carbohydrate transporter. The sequence is that of Early nodulin-like protein 4 from Arabidopsis thaliana (Mouse-ear cress).